We begin with the raw amino-acid sequence, 410 residues long: Putative transposase Rv3428c (410 aa).

One can recognise an Integrase catalytic domain in the interval 40–220; it reads VPRGPVDAGS…QPLRMFEAVE (181 aa). Residues 390–410 are disordered; that stretch reads AANEPTTSSPASTAGGVPARP.

Belongs to the transposase IS21/IS408/IS1162 family.

This Mycobacterium tuberculosis (strain ATCC 25618 / H37Rv) protein is Putative transposase Rv3428c.